A 160-amino-acid polypeptide reads, in one-letter code: CXXC motif containing zinc binding protein (160 aa).

Residues C33, C36, C67, and C70 each contribute to the Zn(2+) site. The residue at position 75 (S75) is a Phosphoserine.

It belongs to the UPF0587 family. As to quaternary structure, monomer.

The chain is CXXC motif containing zinc binding protein from Rattus norvegicus (Rat).